Consider the following 242-residue polypeptide: Caffeoyl-CoA O-methyltransferase 2 (242 aa).

A substrate-binding site is contributed by Lys-16. Residues Thr-58, Glu-80, 82 to 83, Ser-88, Asp-106, and Ala-135 contribute to the S-adenosyl-L-methionine site; that span reads GV. Asp-158 lines the substrate pocket. Asp-158 contacts a divalent metal cation. Asp-160 lines the S-adenosyl-L-methionine pocket. A divalent metal cation contacts are provided by Asp-184 and Asn-185. Substrate is bound at residue Asn-189.

It belongs to the class I-like SAM-binding methyltransferase superfamily. Cation-dependent O-methyltransferase family. CCoAMT subfamily. It depends on Mg(2+) as a cofactor. In terms of tissue distribution, mostly expressed in the bottom and middle parts of the stems.

It carries out the reaction (E)-caffeoyl-CoA + S-adenosyl-L-methionine = (E)-feruloyl-CoA + S-adenosyl-L-homocysteine + H(+). The protein operates within aromatic compound metabolism; phenylpropanoid biosynthesis. Functionally, methylates caffeoyl-CoA to feruloyl-CoA and 5-hydroxyferuloyl-CoA to sinapoyl-CoA. Plays a role in the synthesis of feruloylated polysaccharides. Involved in the reinforcement of the plant cell wall. Also involved in the responding to wounding or pathogen challenge by the increased formation of cell wall-bound ferulic acid polymers. Methylates 5-hydroxyferulolyl-CoA more efficiently than caffeoyl-CoA. The chain is Caffeoyl-CoA O-methyltransferase 2 (CCOAOMT2) from Nicotiana tabacum (Common tobacco).